The primary structure comprises 143 residues: D-aminoacyl-tRNA deacylase (143 aa).

The Gly-cisPro motif, important for rejection of L-amino acids motif lies at G135–P136.

Belongs to the DTD family. Homodimer.

The protein resides in the cytoplasm. The enzyme catalyses glycyl-tRNA(Ala) + H2O = tRNA(Ala) + glycine + H(+). It catalyses the reaction a D-aminoacyl-tRNA + H2O = a tRNA + a D-alpha-amino acid + H(+). Functionally, an aminoacyl-tRNA editing enzyme that deacylates mischarged D-aminoacyl-tRNAs. Also deacylates mischarged glycyl-tRNA(Ala), protecting cells against glycine mischarging by AlaRS. Acts via tRNA-based rather than protein-based catalysis; rejects L-amino acids rather than detecting D-amino acids in the active site. By recycling D-aminoacyl-tRNA to D-amino acids and free tRNA molecules, this enzyme counteracts the toxicity associated with the formation of D-aminoacyl-tRNA entities in vivo and helps enforce protein L-homochirality. This chain is D-aminoacyl-tRNA deacylase, found in Nocardia farcinica (strain IFM 10152).